The primary structure comprises 157 residues: MLELDLQRATDAATPDDAALRAWCELALRQRSADSEMTIRLVDEAEGRELNHTYRHKDYATNVLSFPADVPDELLDIPLLGDLVICVPVVEREAAEQGKSLQAHWAHLVIHGCLHLLGYDHIEDDEAEEMEALERELLAELGHPDPYADDENDSITH.

Positions 111, 115, and 121 each coordinate Zn(2+).

It belongs to the endoribonuclease YbeY family. It depends on Zn(2+) as a cofactor.

The protein localises to the cytoplasm. Functionally, single strand-specific metallo-endoribonuclease involved in late-stage 70S ribosome quality control and in maturation of the 3' terminus of the 16S rRNA. In Pseudomonas putida (strain W619), this protein is Endoribonuclease YbeY.